The sequence spans 426 residues: Histidinol dehydrogenase (426 aa).

NAD(+) is bound by residues Y126, Q188, and N210. Residues S233, Q255, and H258 each coordinate substrate. Q255 and H258 together coordinate Zn(2+). Active-site proton acceptor residues include E323 and H324. Residues H324, D357, E411, and H416 each coordinate substrate. D357 is a binding site for Zn(2+). H416 provides a ligand contact to Zn(2+).

It belongs to the histidinol dehydrogenase family. Requires Zn(2+) as cofactor.

It catalyses the reaction L-histidinol + 2 NAD(+) + H2O = L-histidine + 2 NADH + 3 H(+). It participates in amino-acid biosynthesis; L-histidine biosynthesis; L-histidine from 5-phospho-alpha-D-ribose 1-diphosphate: step 9/9. Catalyzes the sequential NAD-dependent oxidations of L-histidinol to L-histidinaldehyde and then to L-histidine. This is Histidinol dehydrogenase from Heliobacterium mobile (Heliobacillus mobilis).